A 360-amino-acid polypeptide reads, in one-letter code: Putative F-box protein At1g65770 (360 aa).

The 49-residue stretch at 2–50 (ADWSTLPVDLLNMIAGRLFSNIELKRFRSICRSWRSSVPGAGKKNPFRT) folds into the F-box domain.

This is Putative F-box protein At1g65770 from Arabidopsis thaliana (Mouse-ear cress).